The following is a 504-amino-acid chain: Deoxyguanosinetriphosphate triphosphohydrolase (504 aa).

The HD domain maps to arginine 66–cysteine 273.

This sequence belongs to the dGTPase family. Type 1 subfamily. Homotetramer. It depends on Mg(2+) as a cofactor.

The enzyme catalyses dGTP + H2O = 2'-deoxyguanosine + triphosphate + H(+). Functionally, dGTPase preferentially hydrolyzes dGTP over the other canonical NTPs. This chain is Deoxyguanosinetriphosphate triphosphohydrolase, found in Enterobacter sp. (strain 638).